A 104-amino-acid polypeptide reads, in one-letter code: Flagellar hook-basal body complex protein FliE (104 aa).

The protein belongs to the FliE family.

The protein resides in the bacterial flagellum basal body. The polypeptide is Flagellar hook-basal body complex protein FliE (Escherichia coli (strain SE11)).